We begin with the raw amino-acid sequence, 748 residues long: Phytochrome-like protein Cph1 (748 aa).

The region spanning 19–86 is the PAS domain; that stretch reads AIHTAHLIQP…IQSRLTAGQI (68 aa). The segment at 87 to 510 is chromophore binding domain; it reads SSLNPSKLWA…KKAIVNLILR (424 aa). In terms of domain architecture, GAF spans 152–320; that stretch reads NLRDFYDVIV…VVFSNISAQE (169 aa). Position 259 (C259) interacts with a tetrapyrrole. Residues 535 to 748 form the Histidine kinase domain; it reads IASHDLQEPL…TFYFSIPIGN (214 aa). Residue H538 is modified to Phosphohistidine; by autocatalysis.

This sequence in the N-terminal section; belongs to the phytochrome family. Homodimer. In terms of processing, contains one covalently linked tetrapyrrole chromophore.

The enzyme catalyses ATP + protein L-histidine = ADP + protein N-phospho-L-histidine.. Functionally, regulatory photoreceptor which exists in two forms that are reversibly interconvertible by light: the R form that absorbs maximally in the red region of the spectrum and the FR form that absorbs maximally in the far-red region. Also has a slight blue shift for the far-red maximum. Forms a two-component system with the Rrcp1 response regulator. The sequence is that of Phytochrome-like protein Cph1 (cph1) from Synechocystis sp. (strain ATCC 27184 / PCC 6803 / Kazusa).